The primary structure comprises 389 residues: Cytochrome b (389 aa).

The next 4 helical transmembrane spans lie at 36 to 56 (MGSL…FLAM), 80 to 102 (WLIR…THIA), 117 to 137 (VWTV…LGYC), and 183 to 203 (FFAF…MHMM). Heme b-binding residues include His86 and His100. Residues His187 and His201 each coordinate heme b. His206 is an a ubiquinone binding site. The next 4 helical transmembrane spans lie at 229–249 (FVFK…LFVF), 293–313 (LLGV…PITD), 325–345 (LSKF…IIGM), and 352–372 (FVLI…IIVP).

This sequence belongs to the cytochrome b family. Fungal cytochrome b-c1 complex contains 10 subunits; 3 respiratory subunits, 2 core proteins and 5 low-molecular weight proteins. Cytochrome b-c1 complex is a homodimer. It depends on heme b as a cofactor.

Its subcellular location is the mitochondrion inner membrane. Its function is as follows. Component of the ubiquinol-cytochrome c reductase complex (complex III or cytochrome b-c1 complex) that is part of the mitochondrial respiratory chain. The b-c1 complex mediates electron transfer from ubiquinol to cytochrome c. Contributes to the generation of a proton gradient across the mitochondrial membrane that is then used for ATP synthesis. This Vanderwaltozyma polyspora (strain ATCC 22028 / DSM 70294 / BCRC 21397 / CBS 2163 / NBRC 10782 / NRRL Y-8283 / UCD 57-17) (Kluyveromyces polysporus) protein is Cytochrome b (COB).